A 713-amino-acid chain; its full sequence is RNA-binding protein vts1 (713 aa).

Residues 154–188 show a composition bias toward low complexity; that stretch reads NSGLSLDKSLPSSPKGDSPSLSSSLPSLTTKSNLS. 5 disordered regions span residues 154–208, 254–336, 356–389, 554–596, and 667–713; these read NSGL…SSKH, EPPA…RDRG, DESS…SRPL, EKIE…GNEL, and KAAK…SSMD. Polar residues-rich tracts occupy residues 189 to 208 and 258 to 281; these read GNLN…SSKH and SSAS…NANV. 2 stretches are compositionally biased toward low complexity: residues 282–297 and 304–320; these read TSSL…SKTT and SKKS…PNTS. Polar residues predominate over residues 321 to 330; it reads FFETPHNNIW. Residues 369-378 are compositionally biased toward pro residues; it reads SPPPPPPPPE. Residues 559-569 are compositionally biased toward polar residues; sequence PPNNSKNQTYR. Over residues 570-583 the composition is skewed to basic residues; sequence RSSRGSNKTRKSIS. The SAM domain maps to 595–656; the sequence is ELPQDIPSWL…LKSFQEVAPL (62 aa). The segment covering 670–681 has biased composition (polar residues); the sequence is KNQSSESLTSFK. At serine 673 the chain carries Phosphoserine. Positions 691–702 are enriched in low complexity; the sequence is SGSMSNEISSNS. A compositionally biased stretch (polar residues) spans 703–713; that stretch reads TKQDVSSSSMD.

This sequence belongs to the VTS1 family. In terms of assembly, monomer. Binds to RNA.

The protein resides in the cytoplasm. Its subcellular location is the cytosol. The protein localises to the P-body. Its function is as follows. RNA-binding protein involved in post-transcriptional regulation through transcript degradation. This Schizosaccharomyces pombe (strain 972 / ATCC 24843) (Fission yeast) protein is RNA-binding protein vts1.